The following is a 585-amino-acid chain: Trehalase (585 aa).

A signal peptide spans 1-32; it reads MAKTTPMAKPSVGLLTLQVLVFCALTGSLASA. Residues arginine 184 and 191-192 contribute to the substrate site; that span reads WD. Asparagine 207 carries N-linked (GlcNAc...) asparagine glycosylation. Residues asparagine 228, 237 to 239, 302 to 304, and glycine 336 each bind substrate; these read RSQ and RPE. The active-site Proton donor/acceptor is the aspartate 338. Residue asparagine 348 is glycosylated (N-linked (GlcNAc...) asparagine). The Proton donor/acceptor role is filled by glutamate 535. Glutamate 550 is a substrate binding site.

This sequence belongs to the glycosyl hydrolase 37 family. As to expression, expressed by the venom gland.

Its subcellular location is the secreted. The enzyme catalyses alpha,alpha-trehalose + H2O = alpha-D-glucose + beta-D-glucose. The protein is Trehalase (tre1) of Pimpla hypochondriaca (Parasitoid wasp).